The following is a 171-amino-acid chain: uncharacterized protein (171 aa).

The HTH gntR-type domain maps to 30–97; it reads AGRVSAAYHA…PKKGIIICAL (68 aa). A DNA-binding region (H-T-H motif) is located at residues 57–76; sequence EIEIARQLGMSRTPVHEAMA.

This is an uncharacterized protein from Agrobacterium vitis (Rhizobium vitis).